The primary structure comprises 116 residues: WRMITQEKAQVIVMTTKEVERGRNKCIRYWPPEGESKEYGAYTLLNAKENDFRDYTWRQFVITKESDPPYKQIIYHHHFKVWPDHGVPSDPGGVLNFLHEINECQRSLKNPGPVIV.

One can recognise a Tyrosine-protein phosphatase domain in the interval 1–116; the sequence is WRMITQEKAQ…SLKNPGPVIV (116 aa). Residue Asp-84 participates in substrate binding.

This sequence belongs to the protein-tyrosine phosphatase family.

The catalysed reaction is O-phospho-L-tyrosyl-[protein] + H2O = L-tyrosyl-[protein] + phosphate. The sequence is that of Tyrosine-protein phosphatase 14 (STY-14) from Styela plicata (Wrinkled sea squirt).